The sequence spans 305 residues: Glutaminase (305 aa).

The substrate site is built by S61, N113, E158, N165, Y189, Y241, and V259.

This sequence belongs to the glutaminase family. Homotetramer.

It carries out the reaction L-glutamine + H2O = L-glutamate + NH4(+). The chain is Glutaminase from Clostridium botulinum (strain ATCC 19397 / Type A).